The sequence spans 274 residues: Cytochrome b-c1 complex subunit Rieske, mitochondrial (274 aa).

Over 79 to 103 (SHTDVKVPDFSEYRRPEVLDSTKSS) the chain is Mitochondrial matrix. A helical membrane pass occupies residues 104-140 (RESSEARKGFSYLVTAVTTVGVAYAAKNAVTQFVSSM). The Mitochondrial intermembrane segment spans residues 141–274 (SASADVLALA…FTSDDMVIVG (134 aa)). The Rieske domain maps to 187–272 (EAAVELSQLR…YEFTSDDMVI (86 aa)). Positions 217, 219, 236, 239, and 241 each coordinate [2Fe-2S] cluster. Cysteines 222 and 238 form a disulfide.

This sequence belongs to the Rieske iron-sulfur protein family. Component of the ubiquinol-cytochrome c oxidoreductase (cytochrome b-c1 complex, complex III, CIII), a multisubunit enzyme composed of 11 subunits. The complex is composed of 3 respiratory subunits cytochrome b, cytochrome c1 and Rieske protein UQCRFS1, 2 core protein subunits UQCRC1/QCR1 and UQCRC2/QCR2, and 6 low-molecular weight protein subunits UQCRH/QCR6, UQCRB/QCR7, UQCRQ/QCR8, UQCR10/QCR9, UQCR11/QCR10 and subunit 9, the cleavage product of Rieske protein UQCRFS1. The complex exists as an obligatory dimer and forms supercomplexes (SCs) in the inner mitochondrial membrane with NADH-ubiquinone oxidoreductase (complex I, CI) and cytochrome c oxidase (complex IV, CIV), resulting in different assemblies (supercomplex SCI(1)III(2)IV(1) and megacomplex MCI(2)III(2)IV(2)). Incorporation of the Rieske protein UQCRFS1 is the penultimate step in complex III assembly. Interacts with TTC19, which is involved in the clearance of UQCRFS1 fragments. As to quaternary structure, component of the ubiquinol-cytochrome c oxidoreductase (cytochrome b-c1 complex, complex III, CIII). Subunit 9 corresponds to the mitochondrial targeting sequence (MTS) of Rieske protein UQCRFS1. It is retained after processing and incorporated inside complex III, where it remains bound to the complex and localizes between the 2 core subunits UQCRC1/QCR1 and UQCRC2/QCR2. [2Fe-2S] cluster is required as a cofactor. Post-translationally, proteolytic processing is necessary for the correct insertion of UQCRFS1 in the complex III dimer. Several fragments are generated during UQCRFS1 insertion, most probably due to the endogenous matrix-processing peptidase (MPP) activity of the 2 core protein subunits UQCRC1/QCR1 and UQCRC2/QCR2, which are homologous to the 2 mitochondrial-processing peptidase (MPP) subunits beta-MPP and alpha-MPP respectively. The action of the protease is also necessary for the clearance of the UQCRFS1 fragments.

It localises to the mitochondrion inner membrane. It carries out the reaction a quinol + 2 Fe(III)-[cytochrome c](out) = a quinone + 2 Fe(II)-[cytochrome c](out) + 2 H(+)(out). In terms of biological role, component of the ubiquinol-cytochrome c oxidoreductase, a multisubunit transmembrane complex that is part of the mitochondrial electron transport chain which drives oxidative phosphorylation. The respiratory chain contains 3 multisubunit complexes succinate dehydrogenase (complex II, CII), ubiquinol-cytochrome c oxidoreductase (cytochrome b-c1 complex, complex III, CIII) and cytochrome c oxidase (complex IV, CIV), that cooperate to transfer electrons derived from NADH and succinate to molecular oxygen, creating an electrochemical gradient over the inner membrane that drives transmembrane transport and the ATP synthase. The cytochrome b-c1 complex catalyzes electron transfer from ubiquinol to cytochrome c, linking this redox reaction to translocation of protons across the mitochondrial inner membrane, with protons being carried across the membrane as hydrogens on the quinol. In the process called Q cycle, 2 protons are consumed from the matrix, 4 protons are released into the intermembrane space and 2 electrons are passed to cytochrome c. The Rieske protein is a catalytic core subunit containing a [2Fe-2S] iron-sulfur cluster. It cycles between 2 conformational states during catalysis to transfer electrons from the quinol bound in the Q(0) site in cytochrome b to cytochrome c1. Incorporation of UQCRFS1 is the penultimate step in complex III assembly. Component of the ubiquinol-cytochrome c oxidoreductase (cytochrome b-c1 complex, complex III, CIII). UQCRFS1 undergoes proteolytic processing once it is incorporated in the complex III dimer. One of the fragments, called subunit 9, corresponds to its mitochondrial targeting sequence (MTS). The proteolytic processing is necessary for the correct insertion of UQCRFS1 in the complex III dimer, but the persistence of UQCRFS1-derived fragments may prevent newly imported UQCRFS1 to be processed and assembled into complex III and is detrimental for the complex III structure and function. This is Cytochrome b-c1 complex subunit Rieske, mitochondrial (UQCRFS1) from Symphalangus syndactylus (Siamang).